An 837-amino-acid chain; its full sequence is Protein translocase subunit SecA 1 (837 aa).

ATP is bound by residues Gln-85, 103–107 (GEGKT), and Asp-493. Cys-821, Cys-823, Cys-832, and His-833 together coordinate Zn(2+).

This sequence belongs to the SecA family. As to quaternary structure, monomer and homodimer. Part of the essential Sec protein translocation apparatus which comprises SecA, SecYEG and auxiliary proteins SecDF. Other proteins may also be involved. Zn(2+) is required as a cofactor.

The protein resides in the cell membrane. Its subcellular location is the cytoplasm. The catalysed reaction is ATP + H2O + cellular proteinSide 1 = ADP + phosphate + cellular proteinSide 2.. In terms of biological role, part of the Sec protein translocase complex. Interacts with the SecYEG preprotein conducting channel. Has a central role in coupling the hydrolysis of ATP to the transfer of proteins into and across the cell membrane, serving as an ATP-driven molecular motor driving the stepwise translocation of polypeptide chains across the membrane. The sequence is that of Protein translocase subunit SecA 1 from Streptococcus pneumoniae serotype 4 (strain ATCC BAA-334 / TIGR4).